The chain runs to 309 residues: Malate dehydrogenase (309 aa).

Residues 9–14 (GAGFVG) and Asp-33 each bind NAD(+). 2 residues coordinate substrate: Arg-82 and Arg-88. Residues Asn-95 and 118–120 (VNN) contribute to the NAD(+) site. Substrate is bound by residues Asn-120 and Arg-151. His-175 (proton acceptor) is an active-site residue.

The protein belongs to the LDH/MDH superfamily. MDH type 3 family. As to quaternary structure, homotetramer (active enzyme); homodimer and homotrimer at temperatures lower than 55 degrees Celsius (inactive forms).

The catalysed reaction is (S)-malate + NAD(+) = oxaloacetate + NADH + H(+). Functionally, catalyzes the reversible oxidation of malate to oxaloacetate. The sequence is that of Malate dehydrogenase from Chloroflexus aurantiacus (strain ATCC 29366 / DSM 635 / J-10-fl).